The sequence spans 630 residues: tRNA uridine 5-carboxymethylaminomethyl modification enzyme MnmG (630 aa).

Residues 14-19 (GAGHAG), valine 126, and serine 181 each bind FAD. Position 273–287 (273–287 (GPRYCPSIEDKVVRF)) interacts with NAD(+). Residue glutamine 370 participates in FAD binding.

This sequence belongs to the MnmG family. As to quaternary structure, homodimer. Heterotetramer of two MnmE and two MnmG subunits. It depends on FAD as a cofactor.

Its subcellular location is the cytoplasm. Its function is as follows. NAD-binding protein involved in the addition of a carboxymethylaminomethyl (cmnm) group at the wobble position (U34) of certain tRNAs, forming tRNA-cmnm(5)s(2)U34. This chain is tRNA uridine 5-carboxymethylaminomethyl modification enzyme MnmG, found in Alkaliphilus metalliredigens (strain QYMF).